The following is an 83-amino-acid chain: ATP synthase subunit c (83 aa).

Helical transmembrane passes span 10–30 (IAVALLIGMGALGTAIGFGLL) and 52–72 (MFIVAGLLDAVTMIGVGIALY).

It belongs to the ATPase C chain family. As to quaternary structure, F-type ATPases have 2 components, F(1) - the catalytic core - and F(0) - the membrane proton channel. F(1) has five subunits: alpha(3), beta(3), gamma(1), delta(1), epsilon(1). F(0) has three main subunits: a(1), b(2) and c(10-14). The alpha and beta chains form an alternating ring which encloses part of the gamma chain. F(1) is attached to F(0) by a central stalk formed by the gamma and epsilon chains, while a peripheral stalk is formed by the delta and b chains.

Its subcellular location is the cell inner membrane. F(1)F(0) ATP synthase produces ATP from ADP in the presence of a proton or sodium gradient. F-type ATPases consist of two structural domains, F(1) containing the extramembraneous catalytic core and F(0) containing the membrane proton channel, linked together by a central stalk and a peripheral stalk. During catalysis, ATP synthesis in the catalytic domain of F(1) is coupled via a rotary mechanism of the central stalk subunits to proton translocation. In terms of biological role, key component of the F(0) channel; it plays a direct role in translocation across the membrane. A homomeric c-ring of between 10-14 subunits forms the central stalk rotor element with the F(1) delta and epsilon subunits. This chain is ATP synthase subunit c, found in Shewanella amazonensis (strain ATCC BAA-1098 / SB2B).